The primary structure comprises 267 residues: Thiazole synthase (267 aa).

Lys-107 serves as the catalytic Schiff-base intermediate with DXP. Residues Gly-168, Ala-194 to Gly-195, and Asn-216 to Thr-217 each bind 1-deoxy-D-xylulose 5-phosphate.

Belongs to the ThiG family. Homotetramer. Forms heterodimers with either ThiH or ThiS.

It localises to the cytoplasm. It catalyses the reaction [ThiS sulfur-carrier protein]-C-terminal-Gly-aminoethanethioate + 2-iminoacetate + 1-deoxy-D-xylulose 5-phosphate = [ThiS sulfur-carrier protein]-C-terminal Gly-Gly + 2-[(2R,5Z)-2-carboxy-4-methylthiazol-5(2H)-ylidene]ethyl phosphate + 2 H2O + H(+). It functions in the pathway cofactor biosynthesis; thiamine diphosphate biosynthesis. Catalyzes the rearrangement of 1-deoxy-D-xylulose 5-phosphate (DXP) to produce the thiazole phosphate moiety of thiamine. Sulfur is provided by the thiocarboxylate moiety of the carrier protein ThiS. In vitro, sulfur can be provided by H(2)S. This chain is Thiazole synthase, found in Aquifex aeolicus (strain VF5).